Consider the following 678-residue polypeptide: ERAD-associated E3 ubiquitin-protein ligase component HRD3A (678 aa).

An N-terminal signal peptide occupies residues 1 to 25 (MRILSYGIVILSLLVFSFIEFGVHA). Residues 40–71 (GGDDNGVGESSDFDEFGESEPKSEEELDPGSW) form a disordered region. 8 Sel1-like repeats span residues 124–159 (PHAQ…AGGN), 242–277 (ANAM…VDKG), 279–313 (PRSM…AKEG), 317–349 (AFNG…AVDN), 353–386 (SGHY…ANAG), 388–422 (PKAF…AERG), 506–537 (AALL…AKSQ), and 540–568 (AQAM…RYYD). Asn-298 and Asn-335 each carry an N-linked (GlcNAc...) asparagine glycan. The chain crosses the membrane as a helical span at residues 620–640 (VVFEEGNATILTLFVCLITIL).

It belongs to the sel-1 family. In terms of assembly, interacts with OS9.

It is found in the endoplasmic reticulum membrane. Component of the endoplasmic reticulum (ER) quality control system called ER-associated degradation (ERAD) and involved in ubiquitin-dependent degradation of misfolded endoplasmic reticulum proteins. Functions as an ERAD substrate-recruiting factor that recognizes misfolded proteins for the HRD1 E3 ubiquitin ligase complex. Targets the misfolded LRR receptor kinase BRI1. The protein is ERAD-associated E3 ubiquitin-protein ligase component HRD3A of Arabidopsis thaliana (Mouse-ear cress).